Here is a 218-residue protein sequence, read N- to C-terminus: MSKISLDALNVRNALIEKGIETPMIDPTQAKDERRESIAKHMHEVMKLIGLDLRDDSLEETPNRLAKMFIDEIFSGMDYANFPKMTKIKNQMKVSEMVQVNDITLTSTCEHHFVTIDGKVCVAYYPKDWVIGLSKINRIVSFFAQRPQVQERLTEQLLTAFQTILETDDVAVYVKATHFCVKARGIRDTNSYTVTSAYGGVFLEDRDTRKEFLATVQK.

3 residues coordinate Zn(2+): C109, H112, and C180.

It belongs to the GTP cyclohydrolase I family. In terms of assembly, toroid-shaped homodecamer, composed of two pentamers of five dimers.

The catalysed reaction is GTP + H2O = 7,8-dihydroneopterin 3'-triphosphate + formate + H(+). Its pathway is cofactor biosynthesis; 7,8-dihydroneopterin triphosphate biosynthesis; 7,8-dihydroneopterin triphosphate from GTP: step 1/1. This Haemophilus influenzae (strain 86-028NP) protein is GTP cyclohydrolase 1.